The sequence spans 217 residues: Probable glutathione S-transferase (217 aa).

The GST N-terminal domain maps to 2-81; sequence AEVKLLGLRY…YIDEAFEGPS (80 aa). Glutathione is bound by residues Ser-12, Lys-39, Ile-53, and 65–66; that span reads ES. Positions 86–210 constitute a GST C-terminal domain; the sequence is DPYDRALARF…ELLIRYRAYI (125 aa).

Belongs to the GST superfamily. HSP26 family.

It carries out the reaction RX + glutathione = an S-substituted glutathione + a halide anion + H(+). The sequence is that of Probable glutathione S-transferase (PRP1) from Solanum tuberosum (Potato).